The primary structure comprises 355 residues: UDP-N-acetylglucosamine--N-acetylmuramyl-(pentapeptide) pyrophosphoryl-undecaprenol N-acetylglucosamine transferase (355 aa).

UDP-N-acetyl-alpha-D-glucosamine contacts are provided by residues 14–16, asparagine 126, arginine 162, serine 190, isoleucine 243, 262–267, and glutamine 287; these read TGG and ALTVSE.

This sequence belongs to the glycosyltransferase 28 family. MurG subfamily.

Its subcellular location is the cell inner membrane. The catalysed reaction is di-trans,octa-cis-undecaprenyl diphospho-N-acetyl-alpha-D-muramoyl-L-alanyl-D-glutamyl-meso-2,6-diaminopimeloyl-D-alanyl-D-alanine + UDP-N-acetyl-alpha-D-glucosamine = di-trans,octa-cis-undecaprenyl diphospho-[N-acetyl-alpha-D-glucosaminyl-(1-&gt;4)]-N-acetyl-alpha-D-muramoyl-L-alanyl-D-glutamyl-meso-2,6-diaminopimeloyl-D-alanyl-D-alanine + UDP + H(+). The protein operates within cell wall biogenesis; peptidoglycan biosynthesis. Its function is as follows. Cell wall formation. Catalyzes the transfer of a GlcNAc subunit on undecaprenyl-pyrophosphoryl-MurNAc-pentapeptide (lipid intermediate I) to form undecaprenyl-pyrophosphoryl-MurNAc-(pentapeptide)GlcNAc (lipid intermediate II). The polypeptide is UDP-N-acetylglucosamine--N-acetylmuramyl-(pentapeptide) pyrophosphoryl-undecaprenol N-acetylglucosamine transferase (Vibrio vulnificus (strain YJ016)).